The primary structure comprises 375 residues: MAIGEKITISVIKADIGGWPGHSRVHPQLIEAAEEVLAKAKEEGTIIDFYVAYAGDDLQLIMTHKKGVDSPDIHGLAWKAFEEATEIAKEFGLYGAGQDLLKDAFSGNIRGMGPGIAEMEITLRKSEPIVTFHMDKTEPGAFNLPIFRMFADPFNTAGLVIDPNMHMGFRFEVWDIKEHKRVILNTPEEIYDLLALIGAKSRYVIKRVYPKEGHKISKDEPVAVISTEKLYEIAGEYVGKDDPVAIVRAQSGLPALGEVLEPFAFPHLVSGWMRGSHNGPIMPVPMHQANPTRFDGPPRVVALGWQISPEGKLVGPVDLFDDPAFDYARQKALEITEYIRRHGPFEPHRLPLEDMEYTTLPGVLKKLEERFEDIE.

The active-site Proton acceptor; for FBP phosphatase activity is the D15. Mg(2+)-binding residues include D15, H22, D56, and D57. H22 is a beta-D-fructose 1,6-bisphosphate binding site. H22 contributes to the dihydroxyacetone phosphate binding site. Y94 contributes to the beta-D-fructose 1,6-bisphosphate binding site. Q98 is a Mg(2+) binding site. 107–108 (GN) contributes to the beta-D-fructose 1,6-bisphosphate binding site. D135 provides a ligand contact to Mg(2+). K136 lines the beta-D-fructose 1,6-bisphosphate pocket. K136 serves as a coordination point for dihydroxyacetone phosphate. Residue Y237 is the Proton donor/acceptor; for FBP aldolase activity of the active site. 3 residues coordinate Mg(2+): K240, D241, and D242. K240 serves as the catalytic Schiff-base intermediate with DHAP; for FBP aldolase activity. Beta-D-fructose 1,6-bisphosphate contacts are provided by residues 250–251 (QS), R274, D295, and Y357. 2 residues coordinate dihydroxyacetone phosphate: R274 and D295.

This sequence belongs to the FBP aldolase/phosphatase family. As to quaternary structure, homooctamer; dimer of tetramers. The cofactor is Mg(2+).

The catalysed reaction is beta-D-fructose 1,6-bisphosphate = D-glyceraldehyde 3-phosphate + dihydroxyacetone phosphate. It catalyses the reaction beta-D-fructose 1,6-bisphosphate + H2O = beta-D-fructose 6-phosphate + phosphate. Its pathway is carbohydrate biosynthesis; gluconeogenesis. Its activity is regulated as follows. FBPase activity is inhibited by Ca(2+), ATP, ADP and phosphoenolpyruvate. In terms of biological role, catalyzes two subsequent steps in gluconeogenesis: the aldol condensation of dihydroxyacetone phosphate (DHAP) and glyceraldehyde-3-phosphate (GA3P) to fructose-1,6-bisphosphate (FBP), and the dephosphorylation of FBP to fructose-6-phosphate (F6P). Can also dephosphorylate, with lower activity, other related substrates including fructose-1-phosphate, fructose-6-phosphate, glucose-1-phosphate, glucose-6-phosphate, glycerol-2-phosphate, phosphoenolpyruvate, 5'-AMP, 6'-ADP and 7'-ATP. The protein is Fructose-1,6-bisphosphate aldolase/phosphatase of Thermococcus onnurineus (strain NA1).